The following is a 327-amino-acid chain: UDP-glucose 4-epimerase (327 aa).

Thr119 lines the substrate pocket. Residue Tyr143 is the Proton acceptor of the active site.

Belongs to the NAD(P)-dependent epimerase/dehydratase family. NAD(+) is required as a cofactor.

It carries out the reaction UDP-alpha-D-glucose = UDP-alpha-D-galactose. Its pathway is carbohydrate metabolism; galactose metabolism. It functions in the pathway glycan metabolism; exopolysaccharide biosynthesis. The polypeptide is UDP-glucose 4-epimerase (exoB) (Rhizobium leguminosarum bv. trifolii).